The sequence spans 490 residues: Lipoprotein lipase (490 aa).

The first 25 residues, 1-25 (MERGRGMGKTALLAVLCLCLRGAAG), serve as a signal peptide directing secretion. Residues 32–53 (MNFEGIESKFSLRTPAEPDEDV) form an interaction with GPIHBP1 region. Cys-54 and Cys-67 are disulfide-bonded. N-linked (GlcNAc...) (complex) asparagine glycosylation occurs at Asn-70. Position 121 is a 3'-nitrotyrosine (Tyr-121). The active-site Nucleophile is the Ser-159. Catalysis depends on Asp-183, which acts as the Charge relay system. Tyr-191 is modified (3'-nitrotyrosine). Ca(2+)-binding residues include Ala-194, Arg-197, Ser-199, and Asp-202. A disulfide bridge connects residues Cys-243 and Cys-266. The tract at residues 243 to 266 (CNLGEALRLIAEKGFSDVDQLVKC) is essential for determining substrate specificity. His-268 (charge relay system) is an active-site residue. 2 disulfides stabilise this stretch: Cys-291/Cys-310 and Cys-302/Cys-305. A PLAT domain is found at 341-464 (FHYQVKIHFF…KGEEAAIFVK (124 aa)). A 3'-nitrotyrosine modification is found at Tyr-343. Residues Asn-354 and Asn-386 are each glycosylated (N-linked (GlcNAc...) asparagine). The interval 417 to 421 (WSDWW) is important for interaction with lipoprotein particles. The important for heparin binding stretch occupies residues 430 to 434 (RVRVK). Residue 430-441 (RVRVKSGETQKK) coordinates heparin. Positions 443 to 467 (VFCSRDGSSRLGKGEEAAIFVKCLE) are interaction with GPIHBP1. A disulfide bridge links Cys-445 with Cys-465. The tract at residues 471-490 (SRKRGGAKKASKENSAHESA) is disordered. The span at 480-490 (ASKENSAHESA) shows a compositional bias: basic and acidic residues.

This sequence belongs to the AB hydrolase superfamily. Lipase family. As to quaternary structure, homodimer. Interacts with GPIHBP1 with 1:1 stoichiometry. Interacts with APOC2; the interaction activates LPL activity in the presence of lipids. Interaction with heparan sulfate proteoglycans is required to protect LPL against loss of activity. Associates with lipoprotein particles in blood plasma. Interacts with LMF1 and SEL1L; interaction with SEL1L is required to prevent aggregation of newly synthesized LPL in the endoplasmic reticulum (ER), and for normal export of LPL from the ER to the extracellular space. In terms of processing, N-glycan at Asn-70 is a triantennary complex oligosaccharide containing sialic acid, galactose, mannose, and N-acetylglucosamine, the reducing GlcNAc being sulfated at C6. Post-translationally, tyrosine nitration after lipopolysaccharide (LPS) challenge down-regulates the lipase activity.

The protein localises to the cell membrane. The protein resides in the secreted. It localises to the extracellular space. Its subcellular location is the extracellular matrix. The enzyme catalyses a triacylglycerol + H2O = a diacylglycerol + a fatty acid + H(+). It catalyses the reaction a 1,2-diacyl-sn-glycero-3-phosphocholine + H2O = a 2-acyl-sn-glycero-3-phosphocholine + a fatty acid + H(+). It carries out the reaction 1,2,3-tri-(9Z-octadecenoyl)-glycerol + H2O = di-(9Z)-octadecenoylglycerol + (9Z)-octadecenoate + H(+). The catalysed reaction is 1,2-di-(9Z-octadecenoyl)-sn-glycero-3-phosphocholine + H2O = (9Z-octadecenoyl)-sn-glycero-3-phosphocholine + (9Z)-octadecenoate + H(+). The enzyme catalyses 1,2,3-tributanoylglycerol + H2O = dibutanoylglycerol + butanoate + H(+). It catalyses the reaction 1,2-dihexadecanoyl-sn-glycero-3-phosphocholine + H2O = hexadecanoyl-sn-glycero-3-phosphocholine + hexadecanoate + H(+). Ca(2+) binding promotes protein stability and formation of the active homodimer. Functionally, key enzyme in triglyceride metabolism. Catalyzes the hydrolysis of triglycerides from circulating chylomicrons and very low density lipoproteins (VLDL), and thereby plays an important role in lipid clearance from the blood stream, lipid utilization and storage. Although it has both phospholipase and triglyceride lipase activities it is primarily a triglyceride lipase with low but detectable phospholipase activity. Mediates margination of triglyceride-rich lipoprotein particles in capillaries. Recruited to its site of action on the luminal surface of vascular endothelium by binding to GPIHBP1 and cell surface heparan sulfate proteoglycans. In Gallus gallus (Chicken), this protein is Lipoprotein lipase (LPL).